Here is a 309-residue protein sequence, read N- to C-terminus: MTGPALPRILIICGPTASGKSELAVRLARELDGEIVNADSMQIHRGMDIGTAKPTVGEMGAVPHHLLDVADPDRPFSAADFSDAASQAISGIIRRGKRPIVVGGTGLYLRALLHGLVDSPSGAGELRRRLQEEARELGNQAMLERLRRVDPQLATTIHPNNLVRIIRGLEVYHLTGIPLSRYQHEHGFAAERYRSLAIGIRVERRELYERIERRVDRMLATGLLDEVRALLEAGFGPELKAMRSIGYRESCDFLAGNSSLEETTALIKRNTRRYAKRQLTWFNADPEIIWLEYPEKFATILRHCIAFFE.

ATP is bound at residue 14–21 (GPTASGKS). Residue 16 to 21 (TASGKS) coordinates substrate. The tract at residues 39–42 (DSMQ) is interaction with substrate tRNA.

Belongs to the IPP transferase family. In terms of assembly, monomer. Mg(2+) serves as cofactor.

The catalysed reaction is adenosine(37) in tRNA + dimethylallyl diphosphate = N(6)-dimethylallyladenosine(37) in tRNA + diphosphate. Catalyzes the transfer of a dimethylallyl group onto the adenine at position 37 in tRNAs that read codons beginning with uridine, leading to the formation of N6-(dimethylallyl)adenosine (i(6)A). In Pelobacter propionicus (strain DSM 2379 / NBRC 103807 / OttBd1), this protein is tRNA dimethylallyltransferase 1.